Here is a 1404-residue protein sequence, read N- to C-terminus: DNA (cytosine-5)-methyltransferase 3 (1404 aa).

Positions 1–10 are enriched in basic residues; sequence MKTKAGKQKK. A disordered region spans residues 1–35; sequence MKTKAGKQKKRSVDSDDDVSRERRPKRATSGTNFK. Over residues 11-22 the composition is skewed to basic and acidic residues; the sequence is RSVDSDDDVSRE. K486 participates in a covalent cross-link: Glycyl lysine isopeptide (Lys-Gly) (interchain with G-Cter in ubiquitin). BAH domains lie at 614–748 and 788–929; these read RKMD…FSLP and IKYS…KKLP. Residues 969–1402 form the SAM-dependent MTase C5-type domain; that stretch reads LATLDIFAGC…RKLKEALHLR (434 aa). C1085 is a catalytic residue.

It belongs to the class I-like SAM-binding methyltransferase superfamily. C5-methyltransferase family.

Its subcellular location is the nucleus. The enzyme catalyses a 2'-deoxycytidine in DNA + S-adenosyl-L-methionine = a 5-methyl-2'-deoxycytidine in DNA + S-adenosyl-L-homocysteine + H(+). In terms of biological role, maintains chromatin CpG methylation that plays a role in genomic imprinting, regulation of embryogenesis and seed viability. Required for proper patterns of CG DNA methylation in dividing cells. Required during the endosperm development in seeds. In Arabidopsis thaliana (Mouse-ear cress), this protein is DNA (cytosine-5)-methyltransferase 3 (MET3).